We begin with the raw amino-acid sequence, 304 residues long: Probable endonuclease 4 (304 aa).

Zn(2+) is bound by residues His-75, His-115, Glu-151, Asp-185, His-188, His-221, Asp-234, His-236, and Glu-266.

This sequence belongs to the AP endonuclease 2 family. Zn(2+) is required as a cofactor.

It carries out the reaction Endonucleolytic cleavage to 5'-phosphooligonucleotide end-products.. Functionally, endonuclease IV plays a role in DNA repair. It cleaves phosphodiester bonds at apurinic or apyrimidinic (AP) sites, generating a 3'-hydroxyl group and a 5'-terminal sugar phosphate. In Ureaplasma urealyticum serovar 10 (strain ATCC 33699 / Western), this protein is Probable endonuclease 4.